The primary structure comprises 446 residues: Coiled-coil domain-containing protein 112 (446 aa).

Coiled-coil stretches lie at residues 35–116 (KTER…RKID) and 219–400 (ERKK…NVSR). Disordered regions lie at residues 253–272 (FHNKQEDNQKQKEEQRKKQK) and 390–430 (LKEK…LLHI). Over residues 255-268 (NKQEDNQKQKEEQR) the composition is skewed to basic and acidic residues.

It is found in the cytoplasm. Its subcellular location is the cytoskeleton. It localises to the microtubule organizing center. The protein localises to the centrosome. The protein resides in the centriolar satellite. This chain is Coiled-coil domain-containing protein 112 (CCDC112), found in Homo sapiens (Human).